The following is a 447-amino-acid chain: Sporulation protein YpeB (447 aa).

Belongs to the YpeB family.

Its function is as follows. Required for spore cortex hydrolysis during germination. Appears to be required for either expression, localization, activation or function of SleB. This is Sporulation protein YpeB from Halalkalibacterium halodurans (strain ATCC BAA-125 / DSM 18197 / FERM 7344 / JCM 9153 / C-125) (Bacillus halodurans).